Here is a 176-residue protein sequence, read N- to C-terminus: Orotate phosphoribosyltransferase (176 aa).

5-phospho-alpha-D-ribose 1-diphosphate contacts are provided by residues R90, K91, K94, and 116 to 124; that span reads EDVTTTGGS. 2 residues coordinate orotate: T120 and R148.

The protein belongs to the purine/pyrimidine phosphoribosyltransferase family. PyrE subfamily. Homodimer. Mg(2+) serves as cofactor.

The catalysed reaction is orotidine 5'-phosphate + diphosphate = orotate + 5-phospho-alpha-D-ribose 1-diphosphate. Its pathway is pyrimidine metabolism; UMP biosynthesis via de novo pathway; UMP from orotate: step 1/2. Its function is as follows. Catalyzes the transfer of a ribosyl phosphate group from 5-phosphoribose 1-diphosphate to orotate, leading to the formation of orotidine monophosphate (OMP). This chain is Orotate phosphoribosyltransferase, found in Methanocaldococcus jannaschii (strain ATCC 43067 / DSM 2661 / JAL-1 / JCM 10045 / NBRC 100440) (Methanococcus jannaschii).